The following is a 534-amino-acid chain: Potential RNA-dependent RNA polymerase (534 aa).

One can recognise a RdRp catalytic domain in the interval 255–373 (DVVVCTDFSK…TYPGISAEDV (119 aa)).

The protein resides in the virion. The enzyme catalyses RNA(n) + a ribonucleoside 5'-triphosphate = RNA(n+1) + diphosphate. Its function is as follows. RNA-directed RNA polymerase that is involved in both transcription and genome replication. The chain is Potential RNA-dependent RNA polymerase (Segment-2) from Human picobirnavirus (strain Human/Thailand/Hy005102/-) (PBV).